Reading from the N-terminus, the 182-residue chain is Ribulose bisphosphate carboxylase small subunit, chloroplastic 5 (182 aa).

The N-terminal 49 residues, 1-49, are a transit peptide targeting the chloroplast; it reads MASSLMSNAATTMAAATTTAQANMVAPFNGLKSISAFPVTRKNNDITSV.

It belongs to the RuBisCO small chain family. As to quaternary structure, heterohexadecamer of 8 large and 8 small subunits.

It is found in the plastid. Its subcellular location is the chloroplast. Its function is as follows. RuBisCO catalyzes two reactions: the carboxylation of D-ribulose 1,5-bisphosphate, the primary event in carbon dioxide fixation, as well as the oxidative fragmentation of the pentose substrate. Both reactions occur simultaneously and in competition at the same active site. Although the small subunit is not catalytic it is essential for maximal activity. The chain is Ribulose bisphosphate carboxylase small subunit, chloroplastic 5 from Mesembryanthemum crystallinum (Common ice plant).